The chain runs to 565 residues: MADQYVEVLGDLIGLLKDYKPGTITIENITKLCQSMGLESFIDELDNDISRLSTASKIIVIDIDYNKTQSTVQDVKLVLASNFDNFDYSNEQLEEAGDKQSNILLNSLTNYDSLKQFHHNLEFLYLLDTYSSVESDNQISSGNNLGSGNGTNGSSLTNKTDKKSVSSGNGLDSKLNEGKLNLFKYFRELKKYINTFFKESCDNRFKVVANVDNRFGLYIYETHGYSMRSRPLAKVYFERAKVPQQRFYEYIYSSETGSWINENSENYSVGVNLILEVNFDDTDEDVFWFPKEFVPTDLFIDEKDQLTSRKVSDVLCHAFYELGSSKKQTIELMNDFTTDLIQIRRFNINNDNLDLIADILNWTIWYRTVLRPIYLKLVSSISDDDDQHIRADIANTKDEFTVENTNPEIMKGPTNKNASFMQRNSMSLQRRRRSSNKAKRPSMSEAVVFKDEGLQQFSLHEIMADTTTEPDQKPDNLNISNNSESFIGQQELMEGSNIINDDKMDIDEEAINDDDSDSQSGEEGNIPVLLVNEDHVSFKGLGSCSFYDDKDKWAKFVEDLFNVFS.

Residues 141 to 170 (SGNNLGSGNGTNGSSLTNKTDKKSVSSGNG) are disordered.

It belongs to the Mediator complex subunit 1 family. Component of the Mediator complex.

Its subcellular location is the nucleus. In terms of biological role, component of the Mediator complex, a coactivator involved in the regulated transcription of nearly all RNA polymerase II-dependent genes. Mediator functions as a bridge to convey information from gene-specific regulatory proteins to the basal RNA polymerase II transcription machinery. Mediator is recruited to promoters by direct interactions with regulatory proteins and serves as a scaffold for the assembly of a functional preinitiation complex with RNA polymerase II and the general transcription factors. The protein is Mediator of RNA polymerase II transcription subunit 1 (MED1) of Candida glabrata (strain ATCC 2001 / BCRC 20586 / JCM 3761 / NBRC 0622 / NRRL Y-65 / CBS 138) (Yeast).